The following is a 433-amino-acid chain: tRNA(Ile)-lysidine synthase (433 aa).

An ATP-binding site is contributed by 27–32 (SGGLDS).

This sequence belongs to the tRNA(Ile)-lysidine synthase family.

The protein resides in the cytoplasm. The enzyme catalyses cytidine(34) in tRNA(Ile2) + L-lysine + ATP = lysidine(34) in tRNA(Ile2) + AMP + diphosphate + H(+). Functionally, ligates lysine onto the cytidine present at position 34 of the AUA codon-specific tRNA(Ile) that contains the anticodon CAU, in an ATP-dependent manner. Cytidine is converted to lysidine, thus changing the amino acid specificity of the tRNA from methionine to isoleucine. The protein is tRNA(Ile)-lysidine synthase of Legionella pneumophila subsp. pneumophila (strain Philadelphia 1 / ATCC 33152 / DSM 7513).